Consider the following 362-residue polypeptide: Biotin synthase (362 aa).

The disordered stretch occupies residues 14–39 (AQRTPEPLPPTSQGLARPSHDVVRGP). In terms of domain architecture, Radical SAM core spans 87–316 (HKGGPAALCG…ARDILVCGGR (230 aa)). 3 residues coordinate [4Fe-4S] cluster: cysteine 105, cysteine 109, and cysteine 112. Cysteine 181 and cysteine 241 together coordinate [2Fe-2S] cluster.

It belongs to the radical SAM superfamily. Biotin synthase family. As to quaternary structure, homodimer. It depends on [4Fe-4S] cluster as a cofactor. [2Fe-2S] cluster serves as cofactor.

It carries out the reaction (4R,5S)-dethiobiotin + (sulfur carrier)-SH + 2 reduced [2Fe-2S]-[ferredoxin] + 2 S-adenosyl-L-methionine = (sulfur carrier)-H + biotin + 2 5'-deoxyadenosine + 2 L-methionine + 2 oxidized [2Fe-2S]-[ferredoxin]. The protein operates within cofactor biosynthesis; biotin biosynthesis; biotin from 7,8-diaminononanoate: step 2/2. In terms of biological role, catalyzes the conversion of dethiobiotin (DTB) to biotin by the insertion of a sulfur atom into dethiobiotin via a radical-based mechanism. The sequence is that of Biotin synthase from Nitratidesulfovibrio vulgaris (strain ATCC 29579 / DSM 644 / CCUG 34227 / NCIMB 8303 / VKM B-1760 / Hildenborough) (Desulfovibrio vulgaris).